A 598-amino-acid polypeptide reads, in one-letter code: Aspartate--tRNA(Asp/Asn) ligase (598 aa).

L-aspartate is bound at residue Glu-177. Positions 201 to 204 (QLFK) are aspartate. Arg-223 serves as a coordination point for L-aspartate. Residues 223–225 (RDE) and Gln-232 contribute to the ATP site. His-456 serves as a coordination point for L-aspartate. Glu-493 serves as a coordination point for ATP. Arg-500 is an L-aspartate binding site. 545 to 548 (GVDR) lines the ATP pocket.

The protein belongs to the class-II aminoacyl-tRNA synthetase family. Type 1 subfamily. Homodimer.

It is found in the cytoplasm. The enzyme catalyses tRNA(Asx) + L-aspartate + ATP = L-aspartyl-tRNA(Asx) + AMP + diphosphate. Functionally, aspartyl-tRNA synthetase with relaxed tRNA specificity since it is able to aspartylate not only its cognate tRNA(Asp) but also tRNA(Asn). Reaction proceeds in two steps: L-aspartate is first activated by ATP to form Asp-AMP and then transferred to the acceptor end of tRNA(Asp/Asn). This chain is Aspartate--tRNA(Asp/Asn) ligase, found in Prochlorococcus marinus subsp. pastoris (strain CCMP1986 / NIES-2087 / MED4).